The sequence spans 194 residues: Large ribosomal subunit protein uL5 (194 aa).

The protein belongs to the universal ribosomal protein uL5 family. As to quaternary structure, part of the 50S ribosomal subunit; part of the 5S rRNA/L5/L18/L25 subcomplex. Contacts the 5S rRNA and the P site tRNA. Forms a bridge to the 30S subunit in the 70S ribosome.

This is one of the proteins that bind and probably mediate the attachment of the 5S RNA into the large ribosomal subunit, where it forms part of the central protuberance. In the 70S ribosome it contacts protein S13 of the 30S subunit (bridge B1b), connecting the 2 subunits; this bridge is implicated in subunit movement. Contacts the P site tRNA; the 5S rRNA and some of its associated proteins might help stabilize positioning of ribosome-bound tRNAs. In Chlorobium luteolum (strain DSM 273 / BCRC 81028 / 2530) (Pelodictyon luteolum), this protein is Large ribosomal subunit protein uL5.